A 118-amino-acid chain; its full sequence is Aspartate 1-decarboxylase (118 aa).

The active-site Schiff-base intermediate with substrate; via pyruvic acid is the Ser25. A Pyruvic acid (Ser) modification is found at Ser25. Substrate is bound at residue Thr57. Catalysis depends on Tyr58, which acts as the Proton donor. 73–75 (GAA) is a substrate binding site.

This sequence belongs to the PanD family. Heterooctamer of four alpha and four beta subunits. It depends on pyruvate as a cofactor. In terms of processing, is synthesized initially as an inactive proenzyme, which is activated by self-cleavage at a specific serine bond to produce a beta-subunit with a hydroxyl group at its C-terminus and an alpha-subunit with a pyruvoyl group at its N-terminus.

Its subcellular location is the cytoplasm. It catalyses the reaction L-aspartate + H(+) = beta-alanine + CO2. It functions in the pathway cofactor biosynthesis; (R)-pantothenate biosynthesis; beta-alanine from L-aspartate: step 1/1. Its function is as follows. Catalyzes the pyruvoyl-dependent decarboxylation of aspartate to produce beta-alanine. In Hyphomonas neptunium (strain ATCC 15444), this protein is Aspartate 1-decarboxylase.